The primary structure comprises 884 residues: Putative GTP diphosphokinase RSH1, chloroplastic (884 aa).

A chloroplast-targeting transit peptide spans 1-55 (MTSASSMSVSVECVNICNLTKGDGNARSDCSALSCAWKAPRALTGFLASTAHPPV). In terms of domain architecture, HD spans 172-279 (FIIHPVAVAR…VKLADRLHNM (108 aa)). In terms of domain architecture, TGS spans 563 to 626 (LGSRVFVFTP…ENAEVVEIVT (64 aa)). Positions 711-727 (QSQDKSRDTTPAPQNGS) are enriched in polar residues. Positions 711–747 (QSQDKSRDTTPAPQNGSVWAPKVNGKHNKAIKNSSSD) are disordered. The ACT domain maps to 797-868 (WLCVVSMDRK…LVLGVLGWSS (72 aa)).

It belongs to the RelA/SpoT family. As to quaternary structure, interacts with RPP4. Interacts with RPP5. In terms of tissue distribution, expressed in hypocotyls, shoots, cotyledons, rosette leaves, sepals and pistils.

It localises to the plastid. The protein localises to the chloroplast. It carries out the reaction GTP + ATP = guanosine 3'-diphosphate 5'-triphosphate + AMP. Its function is as follows. May be involved in a rapid plant ppGpp (guanosine 3'-diphosphate 5'-diphosphate)-mediated response to pathogens and other stresses. Unable to functionally complement E.coli relA mutants. The sequence is that of Putative GTP diphosphokinase RSH1, chloroplastic (RSH1) from Arabidopsis thaliana (Mouse-ear cress).